We begin with the raw amino-acid sequence, 256 residues long: Thiazole synthase (256 aa).

Lysine 96 acts as the Schiff-base intermediate with DXP in catalysis. Residues glycine 157, 183-184 (AG), and 205-206 (NT) contribute to the 1-deoxy-D-xylulose 5-phosphate site.

The protein belongs to the ThiG family. As to quaternary structure, homotetramer. Forms heterodimers with either ThiH or ThiS.

Its subcellular location is the cytoplasm. It carries out the reaction [ThiS sulfur-carrier protein]-C-terminal-Gly-aminoethanethioate + 2-iminoacetate + 1-deoxy-D-xylulose 5-phosphate = [ThiS sulfur-carrier protein]-C-terminal Gly-Gly + 2-[(2R,5Z)-2-carboxy-4-methylthiazol-5(2H)-ylidene]ethyl phosphate + 2 H2O + H(+). It functions in the pathway cofactor biosynthesis; thiamine diphosphate biosynthesis. In terms of biological role, catalyzes the rearrangement of 1-deoxy-D-xylulose 5-phosphate (DXP) to produce the thiazole phosphate moiety of thiamine. Sulfur is provided by the thiocarboxylate moiety of the carrier protein ThiS. In vitro, sulfur can be provided by H(2)S. This chain is Thiazole synthase, found in Bacillus cereus (strain AH187).